We begin with the raw amino-acid sequence, 109 residues long: U4-lycotoxin-Ls1a (109 aa).

The signal sequence occupies residues 1–22 (MKVLVLFSVLFLTLFSYSSTEA). Residues 23 to 44 (IDEFDSDAEDDMLSLMANEQVR) constitute a propeptide that is removed on maturation. Positions 45 to 88 (AKACTPRLHDCSHDRHSCCRGELFKDVCYCFYPEGEDKTEVCSC) are knottin domain. Intrachain disulfides connect cysteine 48–cysteine 63, cysteine 55–cysteine 72, cysteine 62–cysteine 88, and cysteine 74–cysteine 86. A linear cationic cytotoxin domain region spans residues 89 to 108 (QQPKSHKYIEKVVDKAKTVV).

It belongs to the neurotoxin 19 (CSTX) family. 05 (U4-Lctx) subfamily. In terms of tissue distribution, expressed by the venom gland.

Its subcellular location is the secreted. Enhances the high-affinity desensitization of human P2RX3 purinoceptors. In Lycosa singoriensis (Wolf spider), this protein is U4-lycotoxin-Ls1a.